Consider the following 517-residue polypeptide: GMP synthase [glutamine-hydrolyzing] (517 aa).

Positions 9 to 199 constitute a Glutamine amidotransferase type-1 domain; it reads RILILDFGSQ…VLGICGCERL (191 aa). Cysteine 86 functions as the Nucleophile in the catalytic mechanism. Active-site residues include histidine 173 and glutamate 175. One can recognise a GMPS ATP-PPase domain in the interval 200-392; the sequence is WTSESIIEDA…LGLPYEMLYR (193 aa). Position 227-233 (227-233) interacts with ATP; sequence SGGVDSS.

In terms of assembly, homodimer.

It carries out the reaction XMP + L-glutamine + ATP + H2O = GMP + L-glutamate + AMP + diphosphate + 2 H(+). Its pathway is purine metabolism; GMP biosynthesis; GMP from XMP (L-Gln route): step 1/1. Catalyzes the synthesis of GMP from XMP. The sequence is that of GMP synthase [glutamine-hydrolyzing] from Vibrio vulnificus (strain CMCP6).